Reading from the N-terminus, the 1118-residue chain is Error-prone DNA polymerase (1118 aa).

Residues 1071 to 1118 (GPQPMGYAKEVGSDRRSRPEIGNAPARQDLATLSEEAEQVMPKGRNFQ) are disordered.

This sequence belongs to the DNA polymerase type-C family. DnaE2 subfamily.

It localises to the cytoplasm. It carries out the reaction DNA(n) + a 2'-deoxyribonucleoside 5'-triphosphate = DNA(n+1) + diphosphate. Its function is as follows. DNA polymerase involved in damage-induced mutagenesis and translesion synthesis (TLS). It is not the major replicative DNA polymerase. This chain is Error-prone DNA polymerase, found in Mesorhizobium japonicum (strain LMG 29417 / CECT 9101 / MAFF 303099) (Mesorhizobium loti (strain MAFF 303099)).